A 208-amino-acid polypeptide reads, in one-letter code: FMN-dependent NADH:quinone oxidoreductase 1 (208 aa).

Residues serine 10, 15-17 (SES), and 97-100 (MWNF) each bind FMN.

It belongs to the azoreductase type 1 family. In terms of assembly, homodimer. FMN serves as cofactor.

The enzyme catalyses 2 a quinone + NADH + H(+) = 2 a 1,4-benzosemiquinone + NAD(+). The catalysed reaction is N,N-dimethyl-1,4-phenylenediamine + anthranilate + 2 NAD(+) = 2-(4-dimethylaminophenyl)diazenylbenzoate + 2 NADH + 2 H(+). In terms of biological role, quinone reductase that provides resistance to thiol-specific stress caused by electrophilic quinones. Functionally, also exhibits azoreductase activity. Catalyzes the reductive cleavage of the azo bond in aromatic azo compounds to the corresponding amines. This is FMN-dependent NADH:quinone oxidoreductase 1 from Bradyrhizobium diazoefficiens (strain JCM 10833 / BCRC 13528 / IAM 13628 / NBRC 14792 / USDA 110).